The primary structure comprises 164 residues: FMN reductase (NADH) RutF (164 aa).

The protein belongs to the non-flavoprotein flavin reductase family. RutF subfamily.

It catalyses the reaction FMNH2 + NAD(+) = FMN + NADH + 2 H(+). Catalyzes the reduction of FMN to FMNH2 which is used to reduce pyrimidine by RutA via the Rut pathway. The chain is FMN reductase (NADH) RutF from Enterobacter sp. (strain 638).